A 100-amino-acid polypeptide reads, in one-letter code: Osteocalcin (100 aa).

The signal sequence occupies residues 1 to 23 (MRALTLLALLALAALCIAGQAGA). Residues 24–51 (KPSGAESSKGAAFVSKQEGSEVVKRPRR) constitute a propeptide that is removed on maturation. Positions 52-98 (YLYQWLGAPVPYPDPLEPRREVCELNPDCDELADHIGFQEAYRRFYG) constitute a Gla domain. E68, E72, E75, and D81 together coordinate Ca(2+). Position 68 is a 4-carboxyglutamate; partial (E68). A 4-carboxyglutamate mark is found at E72 and E75. Cysteines 74 and 80 form a disulfide.

It belongs to the osteocalcin/matrix Gla protein family. Post-translationally, gamma-carboxyglutamate residues are formed by vitamin K dependent carboxylation by GGCX. These residues are essential for the binding of calcium. Decarboxylation promotes the hormone activity.

The protein resides in the secreted. Bone protein that constitutes 1-2% of the total bone protein, and which acts as a negative regulator of bone formation. Functions to limit bone formation without impairing bone resorption or mineralization. It binds strongly to apatite and calcium. In terms of biological role, the uncarboxylated form acts as a hormone secreted by osteoblasts, which regulates different cellular processes, such as energy metabolism, male fertility and brain development. Regulates of energy metabolism by acting as a hormone favoring pancreatic beta-cell proliferation, insulin secretion and sensitivity and energy expenditure. Uncarboxylated osteocalcin hormone also promotes testosterone production in the testes: acts as a ligand for G protein-coupled receptor GPRC6A at the surface of Leydig cells, initiating a signaling response that promotes the expression of enzymes required for testosterone synthesis in a CREB-dependent manner. Also acts as a regulator of brain development: osteocalcin hormone crosses the blood-brain barrier and acts as a ligand for GPR158 on neurons, initiating a signaling response that prevents neuronal apoptosis in the hippocampus, favors the synthesis of all monoamine neurotransmitters and inhibits that of gamma-aminobutyric acid (GABA). Osteocalcin also crosses the placenta during pregnancy and maternal osteocalcin is required for fetal brain development. The chain is Osteocalcin (BGLAP) from Homo sapiens (Human).